The following is a 363-amino-acid chain: MPKTKLASSVELSFEEPELFVHMYDFAVEITDEFCQIAFPGAFHPAFLLVKLYHILLSVISMGSIIYFFLNYSNLLAFHFNIKILFFFQFCSCFLQSATLAISQTHHLVLALIANGPCDVILAPALFALFNLPLIFSMLCMEFSQVLMVIERTLASCLFVCYEKTTKTIGFVLTSFAVIVPGLTCLYMYYDDKFNYPQMSAMATSPSSKLRINYIFITINVLNVLTLMHSIGLYRHNKQKINMVKGRDHFILSSRFQMNENVSSSKLLWRLSCAQLIIFLLYGCAMYSLRIFLPGERSAVWQAVTEFCYTPPLYCAIMPLICIVCAQNSLKQRNSKVQSLITLRSVGQEGWDNYQGMLQKQWE.

Transmembrane regions (helical) follow at residues 46–66 (AFLLVKLYHILLSVISMGSII), 75–95 (LLAFHFNIKILFFFQFCSCFL), 120–140 (VILAPALFALFNLPLIFSMLC), 169–189 (IGFVLTSFAVIVPGLTCLYMY), 214–234 (YIFITINVLNVLTLMHSIGLY), 273–293 (CAQLIIFLLYGCAMYSLRIFL), and 304–324 (VTEFCYTPPLYCAIMPLICIV).

This sequence belongs to the nematode receptor-like protein srb family.

The protein resides in the membrane. The chain is Serpentine receptor class beta-17 (srb-17) from Caenorhabditis elegans.